The primary structure comprises 1763 residues: Genome polyprotein (1763 aa).

An SF3 helicase domain is found at 458 to 614 (DGVITSCNKR…ESHKRARPGT (157 aa)). 484–491 (GPPGCGKT) contributes to the ATP binding site. Tyr-984 is modified (O-(5'-phospho-RNA)-tyrosine). Thr-1040 bears the Phosphothreonine mark. Ser-1067 bears the Phosphoserine mark. A Peptidase C24 domain is found at 1073–1229 (GPGTKFHKNA…KLVVPYIHID (157 aa)). Residues His-1110, Glu-1131, and Cys-1193 each act as for 3CLpro activity in the active site. In terms of domain architecture, RdRp catalytic spans 1478-1603 (AKVFAVDYSK…MFPTMFASVS (126 aa)).

Homodimer. Interacts with NTPase, protein p30 and protease-polymerase p76. In terms of assembly, interacts with capsid protein VP1 and protease-polymerase p76. Interacts with host IEF4e; this interaction plays a role in translation of viral proteins. As to quaternary structure, homooligomer. Interacts with Vpg, protein p32 and may interact with capsid protein VP1. Specific enzymatic cleavages in vivo yield mature proteins. Pro-Pol is first autocatalytically cleaved, then processes the whole polyprotein. Post-translationally, VPg is uridylylated by the polymerase and is covalently attached to the 5'-end of the polyadenylated genomic and subgenomic RNAs. This uridylylated form acts as a nucleotide-peptide primer for the polymerase.

The protein resides in the host endoplasmic reticulum membrane. The enzyme catalyses a ribonucleoside 5'-triphosphate + H2O = a ribonucleoside 5'-diphosphate + phosphate + H(+). It catalyses the reaction RNA(n) + a ribonucleoside 5'-triphosphate = RNA(n+1) + diphosphate. The catalysed reaction is Endopeptidase with a preference for cleavage when the P1 position is occupied by Glu-|-Xaa and the P1' position is occupied by Gly-|-Yaa.. Together with NTPase and NS4, initiates the formation of the replication complex. Induces the proliferation of the host smooth ER membranes forming long tubular structures. These remodeled membranes probably form the viral factories that contain the replication complex. Its function is as follows. Displays NTPase activity, but no helicase activity. Induces the formation of convoluted membranes derived from the host ER. These remodeled membranes probably form the viral factories that contain the replication complex. Together with NS2 and NS4, initiates the formation of the replication complex. In terms of biological role, probable key protein responsible for the formation of membrane alterations by the virus. Induces the formation of convoluted membranes derived from the host ER. These remodeled membranes probably form the viral factories that contain the replication complex. Together with NS2 and NTPase, initiates the formation of the replication complex. Functionally, viral genome-linked protein is covalently linked to the 5'-end of the positive-strand, negative-strand genomic RNAs and subgenomic RNA. Acts as a genome-linked replication primer. May recruit ribosome to viral RNA thereby promoting viral proteins translation. Interacts with host translation initiation complex to allow the translation of viral proteins. Protease-polymerase p76 processes the polyprotein: Pro-Pol is first released by autocleavage, then all other proteins are cleaved. Cleaves host translation initiation factor eIF4G1, eIF4G2 and PABP1 thereby inducing a shutdown of host protein synthesis. This shutdown may not prevent viral mRNA from being translated since viral Vpg replaces the cap. Also functions as an RNA-directed RNA polymerase, which replicates genomic and antigenomic viral RNA by recognizing specific signals. Also transcribes a subgenomic mRNA by initiating RNA synthesis internally on antigenomic RNA. This sgRNA codes for structural proteins. Catalyzes the covalent attachment VPg with viral RNAs. Cleaves host G3BP1 thereby preventing the assembly of host stress granules. The sequence is that of Genome polyprotein from Feline calicivirus (strain Japanese F4) (FCV).